The chain runs to 248 residues: Probable septum site-determining protein MinC (248 aa).

Residues 94-126 are disordered; it reads GMPPAMRGGQPAADFEAPAGEPQANPGAPEPQI.

It belongs to the MinC family. Interacts with MinD and FtsZ.

Functionally, cell division inhibitor that blocks the formation of polar Z ring septums. Rapidly oscillates between the poles of the cell to destabilize FtsZ filaments that have formed before they mature into polar Z rings. Prevents FtsZ polymerization. In Brucella suis biovar 1 (strain 1330), this protein is Probable septum site-determining protein MinC.